The primary structure comprises 224 residues: 7-cyano-7-deazaguanine synthase (224 aa).

10 to 20 (LSGGLDSATVV) serves as a coordination point for ATP. Cysteine 189, cysteine 199, cysteine 202, and cysteine 205 together coordinate Zn(2+).

The protein belongs to the QueC family. The cofactor is Zn(2+).

The catalysed reaction is 7-carboxy-7-deazaguanine + NH4(+) + ATP = 7-cyano-7-deazaguanine + ADP + phosphate + H2O + H(+). Its pathway is purine metabolism; 7-cyano-7-deazaguanine biosynthesis. Its function is as follows. Catalyzes the ATP-dependent conversion of 7-carboxy-7-deazaguanine (CDG) to 7-cyano-7-deazaguanine (preQ(0)). The protein is 7-cyano-7-deazaguanine synthase of Pseudomonas putida (strain ATCC 47054 / DSM 6125 / CFBP 8728 / NCIMB 11950 / KT2440).